Consider the following 740-residue polypeptide: MMQEMTPEEIKEKKPYLDWSLSEEEYDYICDKLLHRLPNYTETGLFAAMWSEHCSYKKSKSVLRLFPTKGPRILQGPGEGAGVVDIGDGQAVVFKAESHNHPTAVEPYQGAATGVGGILRDVFSMGARPVATLDSLHFGELDDAHTRWLLNETVAGIGGYGNCMGIPTVGGELTFDDIYKGNPVMNAMSVGLLDVKDMQKGLAQGEGNAVMYVGAKTGRDGIHGATFASHSFDSEHESQRSAVQVGDPFMEKLLLEACLELTQKHADWLVGIQDMGAAGIVSSSSEMASEGKSGMELNLDLVPQRESGMSAYEIMLSESQERMLLCVKKGHEEDVKKIFDFYDLDAVVIGRITSGHNYVLRHHGEVVCDIPVTSLTEDVLEEPSEEKQPQHMIDDAAKPAWEPEITDLAKTYKQMLAQPTIASKGMFTQTYDSMVRTSTVVGPGEDSGVLRVRGTHKGIAMTTDGNGRFIYLDPEIGGKRAVVEAAGNIIASGAEPLAITDCLNFGNPNEPEVFWELHHSVMGIAKACEVLETPVVSGNVSLYNETDGKSIYPTPMVGMVGLVKNLDHLVRDSFQEEGDDLYLVGQTGADYAGSELQKMLTGEIFGSLNDLDLDHIKDYQKRLLAQMEAGHVASAHDLSEGGLAVSLAESSFGHGIGAEVACDLTSAELFSETPGRFLVSVPSEYSAEFAAALAADAVKIGQTAGDSLKLTLKDQAADLPVAELKQIWEEALPCLMKSKD.

Histidine 53 is a catalytic residue. ATP contacts are provided by tyrosine 56 and lysine 95. Glutamate 97 is a Mg(2+) binding site. Substrate contacts are provided by residues serine 98–histidine 101 and arginine 120. Histidine 99 (proton acceptor) is an active-site residue. Aspartate 121 contributes to the Mg(2+) binding site. Glutamine 244 is a substrate binding site. Aspartate 274 lines the Mg(2+) pocket. Residue glutamate 318–glutamine 320 participates in substrate binding. Aspartate 501 and glycine 538 together coordinate ATP. Asparagine 539 contributes to the Mg(2+) binding site. Serine 541 contributes to the substrate binding site.

This sequence belongs to the FGAMS family. In terms of assembly, monomer. Part of the FGAM synthase complex composed of 1 PurL, 1 PurQ and 2 PurS subunits.

The protein resides in the cytoplasm. The enzyme catalyses N(2)-formyl-N(1)-(5-phospho-beta-D-ribosyl)glycinamide + L-glutamine + ATP + H2O = 2-formamido-N(1)-(5-O-phospho-beta-D-ribosyl)acetamidine + L-glutamate + ADP + phosphate + H(+). It functions in the pathway purine metabolism; IMP biosynthesis via de novo pathway; 5-amino-1-(5-phospho-D-ribosyl)imidazole from N(2)-formyl-N(1)-(5-phospho-D-ribosyl)glycinamide: step 1/2. In terms of biological role, part of the phosphoribosylformylglycinamidine synthase complex involved in the purines biosynthetic pathway. Catalyzes the ATP-dependent conversion of formylglycinamide ribonucleotide (FGAR) and glutamine to yield formylglycinamidine ribonucleotide (FGAM) and glutamate. The FGAM synthase complex is composed of three subunits. PurQ produces an ammonia molecule by converting glutamine to glutamate. PurL transfers the ammonia molecule to FGAR to form FGAM in an ATP-dependent manner. PurS interacts with PurQ and PurL and is thought to assist in the transfer of the ammonia molecule from PurQ to PurL. In Lactobacillus delbrueckii subsp. bulgaricus (strain ATCC 11842 / DSM 20081 / BCRC 10696 / JCM 1002 / NBRC 13953 / NCIMB 11778 / NCTC 12712 / WDCM 00102 / Lb 14), this protein is Phosphoribosylformylglycinamidine synthase subunit PurL.